Here is a 176-residue protein sequence, read N- to C-terminus: Large ribosomal subunit protein uL10 (176 aa).

This sequence belongs to the universal ribosomal protein uL10 family. As to quaternary structure, part of the ribosomal stalk of the 50S ribosomal subunit. The N-terminus interacts with L11 and the large rRNA to form the base of the stalk. The C-terminus forms an elongated spine to which L12 dimers bind in a sequential fashion forming a multimeric L10(L12)X complex.

Forms part of the ribosomal stalk, playing a central role in the interaction of the ribosome with GTP-bound translation factors. This Natranaerobius thermophilus (strain ATCC BAA-1301 / DSM 18059 / JW/NM-WN-LF) protein is Large ribosomal subunit protein uL10.